Here is a 1174-residue protein sequence, read N- to C-terminus: Creatine kinase, flagellar (1174 aa).

Over residues 1 to 14 (MGCAASSQQTTATG) the composition is skewed to polar residues. The disordered stretch occupies residues 1–62 (MGCAASSQQT…PFVEPDPNYP (62 aa)). Over residues 18 to 39 (AAGEKANPAPANNNPNAANKAE) the composition is skewed to low complexity. Positions 53–139 (PFVEPDPNYP…FDPTIDKRHN (87 aa)) constitute a Phosphagen kinase N-terminal 1 domain. The 1; approximate repeat unit spans residues 61–414 (YPDLSKHNNY…EKALEKGSDI (354 aa)). A Phosphagen kinase C-terminal 1 domain is found at 166–408 (YVLSCRVRTG…KKLIELEKAL (243 aa)). ATP contacts are provided by residues 169-173 (SCRVR), H232, R277, and 333-337 (RAGVH). The 87-residue stretch at 426-512 (RAEQVKEGYP…FDPVIDARHG (87 aa)) folds into the Phosphagen kinase N-terminal 2 domain. The stretch at 434–787 (YPDLSKHNNH…EKKLEKGEDI (354 aa)) is one 2; approximate repeat. One can recognise a Phosphagen kinase C-terminal 2 domain in the interval 539–781 (YVLSCRVRTG…ELLVQMEKKL (243 aa)). ATP is bound by residues 542-546 (SCRVR), H605, R706, 734-739 (RGTGGV), and D749. The region spanning 800-886 (PIKPFSYDYP…FDPVISARHG (87 aa)) is the Phosphagen kinase N-terminal 3 domain. A 3; approximate repeat occupies 808 to 1161 (YPDFSLHNNW…EKALMKGEDI (354 aa)). Positions 913–1155 (FVLSCRVRTG…KLLVNLEKAL (243 aa)) constitute a Phosphagen kinase C-terminal 3 domain.

The protein belongs to the ATP:guanido phosphotransferase family. In terms of assembly, monomer.

The protein resides in the cytoplasm. It is found in the cytoskeleton. Its subcellular location is the flagellum axoneme. It catalyses the reaction creatine + ATP = N-phosphocreatine + ADP + H(+). Functionally, this axonemal protein participates in an energy shuttle that utilizes phosphocreatine to transfer the energy from ATP generated by the mitochondrion in the sperm head to dynein in the distal portions of the flagellum. The sequence is that of Creatine kinase, flagellar from Strongylocentrotus purpuratus (Purple sea urchin).